An 89-amino-acid polypeptide reads, in one-letter code: Small ribosomal subunit protein uS15 (89 aa).

Belongs to the universal ribosomal protein uS15 family. In terms of assembly, part of the 30S ribosomal subunit. Forms a bridge to the 50S subunit in the 70S ribosome, contacting the 23S rRNA.

One of the primary rRNA binding proteins, it binds directly to 16S rRNA where it helps nucleate assembly of the platform of the 30S subunit by binding and bridging several RNA helices of the 16S rRNA. Its function is as follows. Forms an intersubunit bridge (bridge B4) with the 23S rRNA of the 50S subunit in the ribosome. The polypeptide is Small ribosomal subunit protein uS15 (Magnetococcus marinus (strain ATCC BAA-1437 / JCM 17883 / MC-1)).